Consider the following 229-residue polypeptide: 7-cyano-7-deazaguanine synthase (229 aa).

Residue 14 to 24 (LSGGQDSTTCL) participates in ATP binding. Zn(2+) contacts are provided by C192, C200, C203, and C206.

The protein belongs to the QueC family. It depends on Zn(2+) as a cofactor.

It carries out the reaction 7-carboxy-7-deazaguanine + NH4(+) + ATP = 7-cyano-7-deazaguanine + ADP + phosphate + H2O + H(+). Its pathway is purine metabolism; 7-cyano-7-deazaguanine biosynthesis. Catalyzes the ATP-dependent conversion of 7-carboxy-7-deazaguanine (CDG) to 7-cyano-7-deazaguanine (preQ(0)). This chain is 7-cyano-7-deazaguanine synthase, found in Laribacter hongkongensis (strain HLHK9).